The chain runs to 633 residues: Extracellular metalloproteinase 3 (633 aa).

The N-terminal stretch at 1-18 (MHGLLLAGLLALPMNVLA) is a signal peptide. A propeptide spanning residues 19 to 246 (HPAEQHASNV…VHNVVDYVAS (228 aa)) is cleaved from the precursor. Asn410 carries N-linked (GlcNAc...) asparagine glycosylation. His429 serves as a coordination point for Zn(2+). Glu430 is a catalytic residue. His433 is a binding site for Zn(2+). Asn480 and Asn622 each carry an N-linked (GlcNAc...) asparagine glycan.

It belongs to the peptidase M36 family. Zn(2+) serves as cofactor.

Its subcellular location is the secreted. In terms of biological role, secreted metalloproteinase probably acting as a virulence factor. The chain is Extracellular metalloproteinase 3 (MEP3) from Trichophyton tonsurans (Scalp ringworm fungus).